Consider the following 338-residue polypeptide: UDP-3-O-acylglucosamine N-acyltransferase (338 aa).

The active-site Proton acceptor is His239.

The protein belongs to the transferase hexapeptide repeat family. LpxD subfamily. As to quaternary structure, homotrimer.

It carries out the reaction a UDP-3-O-[(3R)-3-hydroxyacyl]-alpha-D-glucosamine + a (3R)-hydroxyacyl-[ACP] = a UDP-2-N,3-O-bis[(3R)-3-hydroxyacyl]-alpha-D-glucosamine + holo-[ACP] + H(+). It functions in the pathway bacterial outer membrane biogenesis; LPS lipid A biosynthesis. Functionally, catalyzes the N-acylation of UDP-3-O-acylglucosamine using 3-hydroxyacyl-ACP as the acyl donor. Is involved in the biosynthesis of lipid A, a phosphorylated glycolipid that anchors the lipopolysaccharide to the outer membrane of the cell. The chain is UDP-3-O-acylglucosamine N-acyltransferase from Thermosynechococcus vestitus (strain NIES-2133 / IAM M-273 / BP-1).